The primary structure comprises 676 residues: Rho guanine nucleotide exchange factor 37 (676 aa).

The tract at residues 1–26 (MADFETDEASSKSESPEQEGQGSEDK) is disordered. One can recognise a DH domain in the interval 30 to 213 (HQRLAIRELI…QDVNSNINEY (184 aa)). One can recognise a BAR domain in the interval 254-455 (LKQEAGLVPR…LPHRHVSEPD (202 aa)). SH3 domains are found at residues 506–569 (GPGK…LYHP) and 603–666 (PTMS…RTPS). Disordered regions lie at residues 568–601 (HPIN…SVPT) and 657–676 (PSNF…NLPS).

Its function is as follows. May act as a guanine nucleotide exchange factor (GEF). The protein is Rho guanine nucleotide exchange factor 37 (Arhgef37) of Rattus norvegicus (Rat).